The following is a 212-amino-acid chain: Peroxisomal membrane protein 4 (212 aa).

Residue asparagine 57 is glycosylated (N-linked (GlcNAc...) asparagine). 2 helical membrane-spanning segments follow: residues 97 to 117 (GKTY…LVFG) and 153 to 173 (WDPF…LFEY). An N-linked (GlcNAc...) asparagine glycan is attached at asparagine 206.

Belongs to the peroxisomal membrane protein PXMP2/4 family. In terms of assembly, interacts with PEX19. In terms of tissue distribution, expressed in normal prostate epithelial cells, and androgen-sensitive prostate adenocarcinoma cells. Not expressed in androgen-insensitive prostate adenocarcinoma cells.

The protein localises to the peroxisome membrane. The protein is Peroxisomal membrane protein 4 (PXMP4) of Homo sapiens (Human).